The chain runs to 428 residues: PGL/p-HBAD biosynthesis glycosyltransferase MRA_2985 (428 aa).

The interval 1–23 (MEETSVAGDPGPDAGTSTAPNAA) is disordered.

It belongs to the UDP-glycosyltransferase family.

Functionally, involved in glycosylation steps downstream of mono-O-methyl-glycosyl-p-hydroxybenzoic acid derivative (p-HBAD I) and 2-O-methyl-rhamnosyl-phenolphthiocerol dimycocerosate (mycoside B) during the p-hydroxybenzoic acid derivatives (p-HBAD) and glycosylated phenolphthiocerol dimycocerosates (PGL) biosynthesis. This chain is PGL/p-HBAD biosynthesis glycosyltransferase MRA_2985, found in Mycobacterium tuberculosis (strain ATCC 25177 / H37Ra).